The sequence spans 293 residues: NAD kinase (293 aa).

The active-site Proton acceptor is the D73. NAD(+) contacts are provided by residues 73 to 74, H78, 147 to 148, R158, R175, D177, 188 to 193, and Q248; these read DG, ND, and TAYALS.

The protein belongs to the NAD kinase family. Requires a divalent metal cation as cofactor.

Its subcellular location is the cytoplasm. It carries out the reaction NAD(+) + ATP = ADP + NADP(+) + H(+). Its function is as follows. Involved in the regulation of the intracellular balance of NAD and NADP, and is a key enzyme in the biosynthesis of NADP. Catalyzes specifically the phosphorylation on 2'-hydroxyl of the adenosine moiety of NAD to yield NADP. The protein is NAD kinase of Nitrosococcus oceani (strain ATCC 19707 / BCRC 17464 / JCM 30415 / NCIMB 11848 / C-107).